Consider the following 509-residue polypeptide: Metal transporter Nramp3 (509 aa).

Positions 1 to 12 (MPQLENNEPLLI) are enriched in low complexity. The segment at 1–25 (MPQLENNEPLLINEEEEEETAYDET) is disordered. The span at 13 to 23 (NEEEEEETAYD) shows a compositional bias: acidic residues. The next 12 membrane-spanning stretches (helical) occupy residues 56 to 76 (LWLF…PGNL), 84 to 104 (AVAG…GLLV), 133 to 153 (MVLW…EVIG), 165 to 185 (ILPL…FLFL), 193 to 213 (LEAV…WMFG), 239 to 259 (AVGV…SALV), 285 to 305 (IALF…AKGF), 327 to 347 (YGGG…AAGQ), 383 to 403 (IIPT…LDVL), 406 to 426 (WLNV…LCLV), 444 to 464 (IAWL…LEFF), and 472 to 492 (VYTG…LYLI).

It belongs to the NRAMP (TC 2.A.55) family. As to expression, expressed in vascular tissues.

The protein localises to the vacuole membrane. Vacuolar metal transporter involved in intracellular metal homeostasis. Can transport iron (Fe), manganese (Mn) and cadmium (Cd). Regulates metal accumulation under Fe starvation. Acts redundantly with NRAMP4 to mobilize vacuolar Fe and provide sufficient Fe during seed germination. In association with NRAMP4, required for optimal growth and photosynthesis under Mn deficiency. Exports Mn from vacuoles in leaf mesophyll cells, making Mn available for functional photosystem II in chloroplasts. Involved in basal resistance to the bacterial pathogen E.chrysanthemi. The sequence is that of Metal transporter Nramp3 (NRAMP3) from Arabidopsis thaliana (Mouse-ear cress).